Here is a 239-residue protein sequence, read N- to C-terminus: Calcium-activated potassium channel subunit beta-3 (239 aa).

Topologically, residues 1–51 (MQPFSIPVQITLQGGRRRQGRTALPASGISNGDPLKVHPKLPSSAGEDRAT) are cytoplasmic. The tract at residues 15 to 38 (GRRRQGRTALPASGISNGDPLKVH) is disordered. The helical transmembrane segment at 52-72 (LLGIAMMASSVLMFFLLGTTV) threads the bilayer. Residues 73-197 (LKPFMLSSPR…GVVLRKSGHK (125 aa)) lie on the Extracellular side of the membrane. N-linked (GlcNAc...) asparagine glycans are attached at residues asparagine 86, asparagine 123, and asparagine 174. Residues 198–218 (VVFHCLFWPLLTLLGGALIVG) form a helical membrane-spanning segment. Topologically, residues 219–239 (LVRLTQHLSFQCEKYRAVVRA) are cytoplasmic.

Belongs to the KCNMB (TC 8.A.14.1) family. KCNMB3 subfamily. In terms of assembly, interacts with KCNMA1 tetramer. There are probably 4 molecules of KCMNB3 per KCNMA1 tetramer. Post-translationally, N-glycosylated. In terms of processing, the extracellular domain contains disulfide bond essential for the gating mechanism.

The protein localises to the membrane. Its function is as follows. Regulatory subunit of the calcium activated potassium KCNMA1 (maxiK) channel. Modulates the calcium sensitivity and gating kinetics of KCNMA1, thereby contributing to KCNMA1 channel diversity. Alters the functional properties of the current expressed by the KCNMA1 channel. May partially inactivate the current of KCNBMA. Two or more subunits of KCNMB3 are required to block the KCNMA1 tetramer. This is Calcium-activated potassium channel subunit beta-3 from Rattus norvegicus (Rat).